The primary structure comprises 270 residues: Carboxy-S-adenosyl-L-methionine synthase (270 aa).

S-adenosyl-L-methionine contacts are provided by residues tyrosine 65, 90-92 (GCS), 143-144 (DI), asparagine 158, and arginine 225.

This sequence belongs to the class I-like SAM-binding methyltransferase superfamily. Cx-SAM synthase family. In terms of assembly, homodimer.

The catalysed reaction is prephenate + S-adenosyl-L-methionine = carboxy-S-adenosyl-L-methionine + 3-phenylpyruvate + H2O. Its function is as follows. Catalyzes the conversion of S-adenosyl-L-methionine (SAM) to carboxy-S-adenosyl-L-methionine (Cx-SAM). The chain is Carboxy-S-adenosyl-L-methionine synthase from Chromohalobacter salexigens (strain ATCC BAA-138 / DSM 3043 / CIP 106854 / NCIMB 13768 / 1H11).